Consider the following 503-residue polypeptide: Probable cytosol aminopeptidase (503 aa).

Mn(2+) is bound by residues Lys270 and Asp275. Residue Lys282 is part of the active site. The Mn(2+) site is built by Asp293, Asp352, and Glu354. Residue Arg356 is part of the active site.

It belongs to the peptidase M17 family. Mn(2+) is required as a cofactor.

It is found in the cytoplasm. It carries out the reaction Release of an N-terminal amino acid, Xaa-|-Yaa-, in which Xaa is preferably Leu, but may be other amino acids including Pro although not Arg or Lys, and Yaa may be Pro. Amino acid amides and methyl esters are also readily hydrolyzed, but rates on arylamides are exceedingly low.. The enzyme catalyses Release of an N-terminal amino acid, preferentially leucine, but not glutamic or aspartic acids.. Its function is as follows. Presumably involved in the processing and regular turnover of intracellular proteins. Catalyzes the removal of unsubstituted N-terminal amino acids from various peptides. In Edwardsiella ictaluri (strain 93-146), this protein is Probable cytosol aminopeptidase.